A 68-amino-acid polypeptide reads, in one-letter code: uncharacterized protein (68 aa).

This is an uncharacterized protein from Dictyostelium discoideum (Social amoeba).